The chain runs to 314 residues: Curved DNA-binding protein (314 aa).

The 65-residue stretch at 5–69 folds into the J domain; it reads DYYKILDVEP…EKRAEYDELR (65 aa). Positions 73-92 are disordered; that stretch reads RQGRPFQTPPGWQSRAGAGA.

The protein resides in the cytoplasm. It is found in the nucleoid. DNA-binding protein that preferentially recognizes a curved DNA sequence. It is probably a functional analog of DnaJ; displays overlapping activities with DnaJ, but functions under different conditions, probably acting as a molecular chaperone in an adaptive response to environmental stresses other than heat shock. Lacks autonomous chaperone activity; binds native substrates and targets them for recognition by DnaK. Its activity is inhibited by the binding of CbpM. The protein is Curved DNA-binding protein of Pseudomonas syringae pv. tomato (strain ATCC BAA-871 / DC3000).